The chain runs to 172 residues: Protein GrpE (172 aa).

Residues 1-23 (MNQDHPECDSEELTQNSPETDPL) are disordered.

The protein belongs to the GrpE family. In terms of assembly, homodimer.

It localises to the cytoplasm. Functionally, participates actively in the response to hyperosmotic and heat shock by preventing the aggregation of stress-denatured proteins, in association with DnaK and GrpE. It is the nucleotide exchange factor for DnaK and may function as a thermosensor. Unfolded proteins bind initially to DnaJ; upon interaction with the DnaJ-bound protein, DnaK hydrolyzes its bound ATP, resulting in the formation of a stable complex. GrpE releases ADP from DnaK; ATP binding to DnaK triggers the release of the substrate protein, thus completing the reaction cycle. Several rounds of ATP-dependent interactions between DnaJ, DnaK and GrpE are required for fully efficient folding. In Xylella fastidiosa (strain M23), this protein is Protein GrpE.